The sequence spans 177 residues: Large ribosomal subunit protein uL6 (177 aa).

This sequence belongs to the universal ribosomal protein uL6 family. In terms of assembly, part of the 50S ribosomal subunit.

This protein binds to the 23S rRNA, and is important in its secondary structure. It is located near the subunit interface in the base of the L7/L12 stalk, and near the tRNA binding site of the peptidyltransferase center. The protein is Large ribosomal subunit protein uL6 of Magnetococcus marinus (strain ATCC BAA-1437 / JCM 17883 / MC-1).